The chain runs to 898 residues: Alanine--tRNA ligase (898 aa).

H589, H593, C693, and H697 together coordinate Zn(2+).

It belongs to the class-II aminoacyl-tRNA synthetase family. Requires Zn(2+) as cofactor.

It is found in the cytoplasm. It catalyses the reaction tRNA(Ala) + L-alanine + ATP = L-alanyl-tRNA(Ala) + AMP + diphosphate. Its function is as follows. Catalyzes the attachment of alanine to tRNA(Ala) in a two-step reaction: alanine is first activated by ATP to form Ala-AMP and then transferred to the acceptor end of tRNA(Ala). Also edits incorrectly charged Ser-tRNA(Ala) and Gly-tRNA(Ala) via its editing domain. In Methanothermobacter thermautotrophicus (strain ATCC 29096 / DSM 1053 / JCM 10044 / NBRC 100330 / Delta H) (Methanobacterium thermoautotrophicum), this protein is Alanine--tRNA ligase.